We begin with the raw amino-acid sequence, 718 residues long: Heme peroxidase 2 (718 aa).

The N-terminal stretch at 1-19 is a signal peptide; sequence MNLKPTILLFTILFLKCAT. The propeptide occupies 20–146; it reads FEVNEETERI…QANRRCSSPP (127 aa). 2 disordered regions span residues 41-64 and 108-144; these read RASE…ANSD and LLQS…RCSS. The span at 45–64 shows a compositional bias: polar residues; it reads NSESEQTSQHIIVSQQANSD. Low complexity predominate over residues 109–118; the sequence is LQSSETTTTT. The segment covering 126 to 139 has biased composition (basic residues); it reads SKRSAIFRSKRQAN. Cys-149 and Cys-164 are joined by a disulfide. Catalysis depends on His-241, which acts as the Proton acceptor. Asp-242 contacts Ca(2+). Cys-262 and Cys-272 form a disulfide bridge. Ser-311, Phe-313, Asp-315, and Ser-317 together coordinate Ca(2+). The N-linked (GlcNAc...) asparagine glycan is linked to Asn-354. A disulfide bridge links Cys-358 with Cys-366. Residue His-477 participates in heme b binding. 4 N-linked (GlcNAc...) asparagine glycosylation sites follow: Asn-551, Asn-592, Asn-662, and Asn-673. Cys-682 and Cys-705 are oxidised to a cystine.

Belongs to the peroxidase family. Heme b is required as a cofactor. In terms of tissue distribution, expressed in the hypodermis and gland cells of the pharynx. Specifically, there is low and transient expression from the distal bulb of the pharynx to the anterior of the buccal cavity. Whole body expression levels increase upon entry into the dauer phase.

Its subcellular location is the secreted. It catalyses the reaction 2 a phenolic donor + H2O2 = 2 a phenolic radical donor + 2 H2O. Its function is as follows. Peroxidase which is involved in maintaining the cuticle integrity in the hypodermis and pharynx. It thus plays a role in conferring resistance against Gram-positive bacteria such as E.faecalis, S.aureus and C.diphtheriae, and yeast such as C.albicans. The chain is Heme peroxidase 2 from Caenorhabditis elegans.